A 150-amino-acid chain; its full sequence is Bcl-2-interacting killer (150 aa).

The short motif at valine 51–cysteine 65 is the BH3 element. The chain crosses the membrane as a helical span at residues proline 127–leucine 147. The segment at proline 127 to glutamine 148 is leucine-zipper.

As to quaternary structure, interacts with RHBDL4/RHBDD1. Interacts with BCL2L10/BCL-B. Proteolytically cleaved by RHBDL4/RHBDD1. RHBDL4/RHBDD1-induced cleavage is a necessary step prior its degradation by the proteosome-dependent mechanism. In terms of processing, ubiquitinated by the ECS(ASB11) complex in response to endoplasmic reticulum stress, leading to substrate recognition by the segregase p97/VCP and degradation by the proteasome. In terms of tissue distribution, expressed in testis, kidney, liver, lung and heart.

The protein resides in the endomembrane system. Its subcellular location is the mitochondrion membrane. In terms of biological role, accelerates programmed cell death. Binding to the apoptosis repressors Bcl-X(L), BHRF1 or Bcl-2 suppresses this death-promoting activity. The protein is Bcl-2-interacting killer (Bik) of Mus musculus (Mouse).